The chain runs to 253 residues: Snake venom serine proteinase 14 (253 aa).

A signal peptide spans 1 to 18 (MVLIRVLANLLILQLSYA). A propeptide spanning residues 19–24 (QKSSEL) is cleaved from the precursor. One can recognise a Peptidase S1 domain in the interval 25–244 (VIGGDECNIN…YTDWIQSIIA (220 aa)). 6 disulfide bridges follow: Cys31–Cys158, Cys49–Cys65, Cys93–Cys251, Cys137–Cys205, Cys169–Cys184, and Cys195–Cys220. Residues His64 and Asp105 each act as charge relay system in the active site. N-linked (GlcNAc...) asparagine glycosylation is found at Asn116, Asn117, and Asn149. The Charge relay system role is filled by Ser199.

The protein belongs to the peptidase S1 family. Snake venom subfamily. Monomer. As to expression, expressed by the venom gland.

The protein localises to the secreted. In terms of biological role, snake venom serine protease that may act in the hemostasis system of the prey. The sequence is that of Snake venom serine proteinase 14 from Crotalus adamanteus (Eastern diamondback rattlesnake).